A 1171-amino-acid chain; its full sequence is MASSSSSGSSTRSSSPSDPPSSFFQKLGAFLGLFSKPQPPRPDYPHAPGNSAREEQTDITEDIQKLGFKDVETLLLYLNSSVKGVNDDKQLLLERLIQLLSKLPPTSTNGKKVTDGLITGLWESLDHPPVSSLGEKYRFREADGSNNNIHNPTLGVAGSHYARSAKPMVYQNPNPPAPETIFDTLMARDPAKFRPHPNQISSVLFYFATIITHDIFQTSSRDPSINLTSSYLDLSPLYGRNLEEQLSVRAMKDGLLKPDTFCSKRVHGFPPGVGVLLIMFNRFHNYVVTSLAKINEGNRFKKPVGDDTAAWEKYDNDLFQTGRLITCGLYVNIVLVDYVRTILNLNRVDSSWILDPRTEEGKSLLSKPTPEAVGNQVSVEFNLIYRWHCGMSQRDDKWTTDMLTEALGGKDPATATLPEFFGALGRFESSFPNEPEKRTLAGLKRQEDGSFEDEGLIKIMQESIEEVAGAFGPNHVPACMRAIEILGMNQARSWNVATLNEFREFIGLKRYDTFEDINPDPKVANLLAEFYGSPDAVELYPGINAEAPKPVIVPGSGLCPPSTTGRAILSDAVTLVRGDRFFTVDYTPRNLTNFGYQEAATDKSVDNGNVIYKLFFRAFPNHYAQNSIYAHFPFVIPSENKKIMESLGLADKYSWQPPQRKPATQMIRSHAAAVKILNNQKDFKVVWGESIGFLTKFPTGENPGLGFALAGDAPANQQSRDQLMKCIFSPKAWEDEVRQFCEATTWDLLRRYSAKVQDKGPHLKVHTHEIDVIRDVISLANARFFAAVYSLPLKTENGDDGVYSDHEMYRSLMLIFSAIFWDNDVSKSFKLRRDARAATQKLGALVEKHIVEMGSLFHSFKHSHSAVSDKTNGLANGGANGHANGNANGHTNGNGIHQNGGAAPSMLRSYGDLMLRRMIEAYGEGKSVKEAVYGQIMPSIAAGTANQTQIMAQCLDYYMSDDGAEHLPEMKRLASLETPEAFNTLMKYLFEGARIRNTTAVPRLVATDQTVEDNIPCLPDPKDSTFLRPIPNPQQAETTRTVKLSRGSMVLVDLTVAAHDATAFPDPEKVRLDRDLDSYTFFGLGPHRCAGDKVVRITMTAVFKVLLQLDGLRRAEGGRGVFKSLPASQWNGQAGRVAGEKPQWSGLRTYVNADESAFSQTPMNMKIRWDD.

Residues 1–22 (MASSSSSGSSTRSSSPSDPPSS) are compositionally biased toward low complexity. Residues 1 to 56 (MASSSSSGSSTRSSSPSDPPSSFFQKLGAFLGLFSKPQPPRPDYPHAPGNSAREEQ) form a disordered region. Positions 114–457 (TDGLITGLWE…DGSFEDEGLI (344 aa)) are fatty acid alpha-dioxygenase. Histidine 213 provides a ligand contact to heme b. Ca(2+) contacts are provided by aspartate 214, serine 229, tyrosine 231, aspartate 233, and serine 235. Residue tyrosine 385 is part of the active site. Histidine 388 lines the heme b pocket. An epoxy alcohol synthase region spans residues 675 to 1171 (KILNNQKDFK…PMNMKIRWDD (497 aa)). The tract at residues 873–900 (GLANGGANGHANGNANGHTNGNGIHQNG) is disordered. Residues 881-895 (GHANGNANGHTNGNG) are compositionally biased toward low complexity. Cysteine 1089 contacts heme.

The protein in the N-terminal section; belongs to the peroxidase family. It in the C-terminal section; belongs to the cytochrome P450 family. As to quaternary structure, homotetramer. It depends on heme b as a cofactor. Ca(2+) is required as a cofactor. Heme serves as cofactor.

It carries out the reaction (9Z,12Z)-octadecadienoate + O2 = (8R,9Z,12Z)-8-hydroperoxyoctadeca-9,12-dienoate. It catalyses the reaction (8R,9Z,12Z)-8-hydroperoxyoctadeca-9,12-dienoate = (7S,8S,9Z,12Z)-7,8-dihydroxyoctadeca-9,12-dienoate. Its function is as follows. 7,8-linoleate diol synthase is a bifunctional enzyme that converts linoleic acid (18:2n-6) into 8-hydroperoxy-8(E),12(Z)-octadecadienoic acid (8-HPODE) and then catalyzes the isomerization of the resulting hydroperoxide to 7,8-dihydroxy-9(Z),12(Z)-octadecadienoic acid (7,8-DiHODE). The sequence is that of 7,8-linoleate diol synthase from Pyricularia oryzae (strain 70-15 / ATCC MYA-4617 / FGSC 8958) (Rice blast fungus).